Consider the following 354-residue polypeptide: Peptide chain release factor 1 (354 aa).

Q230 carries the N5-methylglutamine modification.

Belongs to the prokaryotic/mitochondrial release factor family. Post-translationally, methylated by PrmC. Methylation increases the termination efficiency of RF1.

It localises to the cytoplasm. Functionally, peptide chain release factor 1 directs the termination of translation in response to the peptide chain termination codons UAG and UAA. In Rhodospirillum rubrum (strain ATCC 11170 / ATH 1.1.1 / DSM 467 / LMG 4362 / NCIMB 8255 / S1), this protein is Peptide chain release factor 1.